Here is a 349-residue protein sequence, read N- to C-terminus: Green-sensitive opsin-2 (349 aa).

The Extracellular portion of the chain corresponds to 1 to 36; sequence MNGTEGNNFYIPMSNRTGLVRSPYEYTQYYLADPWQ. 2 N-linked (GlcNAc...) asparagine glycosylation sites follow: asparagine 2 and asparagine 15. Residues 37-61 traverse the membrane as a helical segment; that stretch reads FKALAFYMFFLICFGLPINVLTLLV. At 62-73 the chain is on the cytoplasmic side; it reads TAQHKKLRQPLN. Residues 74–99 traverse the membrane as a helical segment; the sequence is YILVNLAFAGTIMAFFGFTVTFYCSI. Over 100 to 113 the chain is Extracellular; sequence NGYMALGPTGCAIE. An intrachain disulfide couples cysteine 110 to cysteine 187. The helical transmembrane segment at 114 to 133 threads the bilayer; sequence GFFATLGGQVALWSLVVLAI. Topologically, residues 134–152 are cytoplasmic; the sequence is ERYIVVCKPMGSFKFSSNH. A helical transmembrane segment spans residues 153–176; it reads AMAGIAFTWVMASSCAVPPLFGWS. Residues 177-202 are Extracellular-facing; that stretch reads RYIPEGMQTSCGPDYYTLNPEFNNES. Asparagine 200 is a glycosylation site (N-linked (GlcNAc...) asparagine). A helical membrane pass occupies residues 203-230; sequence YVLYMFSCHFCVPVTTIFFTYGSLVCTV. The Cytoplasmic portion of the chain corresponds to 231-252; it reads KAAAAQQQESESTQKAEREVTR. The chain crosses the membrane as a helical span at residues 253 to 276; that stretch reads MVILMVLGFLVAWVPYASFAAWIF. Topologically, residues 277 to 284 are extracellular; the sequence is FNRGAAFS. The chain crosses the membrane as a helical span at residues 285 to 309; the sequence is AQAMAIPAFFSKASALFNPIIYVLL. Lysine 296 bears the N6-(retinylidene)lysine mark. The Cytoplasmic portion of the chain corresponds to 310 to 349; sequence NKQFRSCMLNTLFCGKSPLGDDESSSVSTSKTEVSSVSPA. Residues 328–349 form a disordered region; that stretch reads LGDDESSSVSTSKTEVSSVSPA. Residues 334–349 are compositionally biased toward low complexity; it reads SSVSTSKTEVSSVSPA.

The protein belongs to the G-protein coupled receptor 1 family. Opsin subfamily. Phosphorylated on some or all of the serine and threonine residues present in the C-terminal region.

It localises to the membrane. Functionally, visual pigments are the light-absorbing molecules that mediate vision. They consist of an apoprotein, opsin, covalently linked to cis-retinal. This chain is Green-sensitive opsin-2 (opn1mw2), found in Danio rerio (Zebrafish).